Consider the following 66-residue polypeptide: MPKMKTHRGAAKRVKRTGSGQLKRSRAFTSHLFANKNTKQKRQLRKAKLVSKSDMKRVKQLLAYKK.

Positions 1–16 (MPKMKTHRGAAKRVKR) are enriched in basic residues. The disordered stretch occupies residues 1–28 (MPKMKTHRGAAKRVKRTGSGQLKRSRAF).

Belongs to the bacterial ribosomal protein bL35 family.

The polypeptide is Large ribosomal subunit protein bL35 (Staphylococcus epidermidis (strain ATCC 35984 / DSM 28319 / BCRC 17069 / CCUG 31568 / BM 3577 / RP62A)).